The following is a 642-amino-acid chain: MIDSKDLATLLSLLDESDKPFETIATTFYRTFSKNDHFKVGCAIYTIIKDGFIRIPSQRLIGFYILFSLYKPDSSILSSNSLSSSSILTPSSTTTTTTTEHNNSNNNTSSPSFSSSTVPTNTTLQQNTPSSTSQAISPSSSTSSTSTSSYTNTTTNTTIPSSSPTSTTNTIIENVNDYPIAFNPFLPIFIDELEKQIDSSISSPLFNPIEKQILPLFLTNLPKDFSKKTPKEIINIGMNNTANTTTTTTTTTTTATTNITLPNISISKSSLKEYKNFYLERLPNHCFPSFRSIGISQNILFQLPSTTTTTTNTPTATTTTNTTINTQQSNPSLNTIKNHDINSEELSFFSFEPRFKRAEPPSFNPTTWINPSINHGLLLSNPMSSTVAATIAATATSAPTTILIPSPTTTTSYNSKKIVRDLMTKAIKGRLKKSQILQIKNEMDIDPKLAYYSGLTPKNLPFLVENNTQVAIDTLLKLINSPDFKDHFQTLISMEMNFRSMEVVNALATVDLPPHFIPMYITNCIDSCNNIKDKAMQQRSVRLVCVFIQSLIRNNIINIKNLFCEVQTFCLEFSKIREAISLFKAINDNNNTNNTNTNTNTNNSNTTNTNNNNNNNNNNNNNNNNLINIGEENPNLIIMATK.

2 disordered regions span residues 78–167 (SSNS…PTST) and 589–627 (NNNT…NNLI). A compositionally biased stretch (low complexity) spans 589–625 (NNNTNNTNTNTNTNNSNTTNTNNNNNNNNNNNNNNNN).

This sequence belongs to the CNOT11 family. Component of the CCR4-NOT complex.

The protein resides in the cytoplasm. The protein localises to the nucleus. Component of the CCR4-NOT complex which is one of the major cellular mRNA deadenylases and is linked to various cellular processes including bulk mRNA degradation, miRNA-mediated repression, translational repression during translational initiation and general transcription regulation. Additional complex functions may be a consequence of its influence on mRNA expression. The protein is CCR4-NOT transcription complex subunit 11 (cnot11) of Dictyostelium discoideum (Social amoeba).